The chain runs to 206 residues: Large ribosomal subunit protein uL4 (206 aa).

Belongs to the universal ribosomal protein uL4 family. Part of the 50S ribosomal subunit.

Functionally, one of the primary rRNA binding proteins, this protein initially binds near the 5'-end of the 23S rRNA. It is important during the early stages of 50S assembly. It makes multiple contacts with different domains of the 23S rRNA in the assembled 50S subunit and ribosome. Forms part of the polypeptide exit tunnel. The chain is Large ribosomal subunit protein uL4 from Rhodopseudomonas palustris (strain BisB18).